The primary structure comprises 753 residues: Nuclear hormone receptor family member daf-12 (753 aa).

The disordered stretch occupies residues 1–109 (MGTNGGVIAE…PDDGLLDSSE (109 aa)). Residues 20–29 (NPDKVEEPVV) are compositionally biased toward basic and acidic residues. Positions 30-44 (RRKRVTRRRHRRIHS) are enriched in basic residues. Positions 115-190 (QKTCRVCGDH…VGMKKEWILN (76 aa)) form a DNA-binding region, nuclear receptor. NR C4-type zinc fingers lie at residues 118–138 (CRVC…CESC) and 154–173 (CPYS…CQKC). Residues 191–206 (EEQLRRRKNSRLNNTG) carry the Nuclear localization signal motif. 3 disordered regions span residues 198–251 (KNSR…TINP), 266–314 (NAMP…GYDP), and 376–410 (GHPM…EKNH). Polar residues predominate over residues 201–211 (RLNNTGTCNKR). A compositionally biased stretch (low complexity) spans 212 to 227 (SQPGNQQSPQGPNQQP). Composition is skewed to polar residues over residues 285–301 (PVGS…SLTM) and 394–410 (MSLS…EKNH). The 238-residue stretch at 516–753 (AELKALDAVR…ELPGEFFKIK (238 aa)) folds into the NR LBD domain.

Belongs to the nuclear hormone receptor family. As to quaternary structure, interacts with din-1 isoform d. Expressed throughout muscles of the pharynx. Expressed in epidermal seam cells, the vulva, head neurons, mature spermatheca, uterus and intestine.

The protein localises to the nucleus. Its function is as follows. Nuclear receptor which binds directly to response elements in target gene promoters. Activity is modulated by binding of steroid hormone ligands that include dafachronic acids. Regulates expression of genes involved in postembryonic development and the dauer diapause, in response to environmental cues. Inhibits the expression of let-7 family members when bound to corepressor din-1s which is an isoform of din-1. Plays a role in controlling the timing of seam cell development during the larval stages. Has a role in the immune response to bacterial infection, via regulation of let-7 miRNAs. Controls expression of genes that promote the aerobic catabolism of fatty acids for reproductive growth. May be involved in thermotolerance. The polypeptide is Nuclear hormone receptor family member daf-12 (Caenorhabditis elegans).